We begin with the raw amino-acid sequence, 291 residues long: Probable 2-(5''-triphosphoribosyl)-3'-dephosphocoenzyme-A synthase (291 aa).

The protein belongs to the CitG/MdcB family.

It catalyses the reaction 3'-dephospho-CoA + ATP = 2'-(5''-triphospho-alpha-D-ribosyl)-3'-dephospho-CoA + adenine. In terms of biological role, involved in the formation of 2-(5''-phosphoribosyl)-3'-dephosphocoenzyme-A, the prosthetic group of the acyl-carrier protein of the malonate decarboxylase. In Pseudomonas savastanoi pv. phaseolicola (strain 1448A / Race 6) (Pseudomonas syringae pv. phaseolicola (strain 1448A / Race 6)), this protein is Probable 2-(5''-triphosphoribosyl)-3'-dephosphocoenzyme-A synthase.